Consider the following 445-residue polypeptide: tRNA modification GTPase MnmE (445 aa).

(6S)-5-formyl-5,6,7,8-tetrahydrofolate contacts are provided by R20, E79, and K119. The 157-residue stretch at 215–371 folds into the TrmE-type G domain; it reads GLKLAIVGPP…ILKNIENIAE (157 aa). N225 serves as a coordination point for K(+). GTP contacts are provided by residues 225–230, 244–250, and 269–272; these read NTGKSS, SNIAGTT, and DTAG. Position 229 (S229) interacts with Mg(2+). K(+)-binding residues include S244, I246, and T249. T250 is a Mg(2+) binding site. K445 lines the (6S)-5-formyl-5,6,7,8-tetrahydrofolate pocket.

It belongs to the TRAFAC class TrmE-Era-EngA-EngB-Septin-like GTPase superfamily. TrmE GTPase family. In terms of assembly, homodimer. Heterotetramer of two MnmE and two MnmG subunits. K(+) serves as cofactor.

Its subcellular location is the cytoplasm. Functionally, exhibits a very high intrinsic GTPase hydrolysis rate. Involved in the addition of a carboxymethylaminomethyl (cmnm) group at the wobble position (U34) of certain tRNAs, forming tRNA-cmnm(5)s(2)U34. The polypeptide is tRNA modification GTPase MnmE (Rickettsia akari (strain Hartford)).